Reading from the N-terminus, the 493-residue chain is Alpha-amylase-related protein (493 aa).

The first 19 residues, 1–19, serve as a signal peptide directing secretion; that stretch reads MFKFALTLTLCLAGSLSLA. At glutamine 20 the chain carries Pyrrolidone carboxylic acid. Cysteine 47 and cysteine 103 are oxidised to a cystine. 3 residues coordinate Ca(2+): asparagine 117, glutamine 168, and aspartate 177. A disulfide bridge links cysteine 156 with cysteine 170. Arginine 205 provides a ligand contact to chloride. The active-site Nucleophile is aspartate 207. Residue histidine 211 participates in Ca(2+) binding. Glutamate 244 acts as the Proton donor in catalysis. Residues asparagine 307 and arginine 342 each contribute to the chloride site. 3 cysteine pairs are disulfide-bonded: cysteine 375/cysteine 381, cysteine 417/cysteine 440, and cysteine 447/cysteine 459.

This sequence belongs to the glycosyl hydrolase 13 family. In terms of assembly, monomer. The cofactor is Ca(2+). Chloride serves as cofactor. As to expression, midgut and fat body.

Its subcellular location is the secreted. The enzyme catalyses Endohydrolysis of (1-&gt;4)-alpha-D-glucosidic linkages in polysaccharides containing three or more (1-&gt;4)-alpha-linked D-glucose units.. This is Alpha-amylase-related protein (Amyrel) from Drosophila melanogaster (Fruit fly).